A 198-amino-acid chain; its full sequence is MICOS complex subunit MIC26 (198 aa).

The signal sequence occupies residues 1–25 (MFKVIHRYVGPASLSLLTFKVYASS). Residues 108 to 128 (PGFFPRLGVIGFAGVVGLVLA) traverse the membrane as a helical segment. O-linked (Xyl...) (chondroitin sulfate) serine glycosylation occurs at serine 162.

It belongs to the apolipoprotein O/MICOS complex subunit Mic27 family. In terms of assembly, component of the mitochondrial contact site and cristae organizing system (MICOS) complex, composed of at least MICOS10/MIC10, CHCHD3/MIC19, CHCHD6/MIC25, APOOL/MIC27, IMMT/MIC60, APOO/MIC23/MIC26 and MICOS13/MIC13. This complex was also known under the names MINOS or MitOS complex. The MICOS complex associates with mitochondrial outer membrane proteins SAMM50, MTX1 and MTX2 (together described as components of the mitochondrial outer membrane sorting assembly machinery (SAM) complex) and DNAJC11, mitochondrial inner membrane protein TMEM11 and with HSPA9. The MICOS and SAM complexes together with DNAJC11 are part of a large protein complex spanning both membranes termed the mitochondrial intermembrane space bridging (MIB) complex. Interacts with IMMT/MIC60. Interacts with MICOS10/MIC10 and APOOL/MIC27. Post-translationally, O-glycosylation; glycosaminoglycan of chondroitin-sulfate type.

The protein localises to the mitochondrion inner membrane. Its subcellular location is the secreted. It is found in the mitochondrion. It localises to the endoplasmic reticulum membrane. The protein resides in the golgi apparatus membrane. Component of the MICOS complex, a large protein complex of the mitochondrial inner membrane that plays crucial roles in the maintenance of crista junctions, inner membrane architecture, and formation of contact sites to the outer membrane. Plays a crucial role in crista junction formation and mitochondrial function. Can induce cardiac lipotoxicity by enhancing mitochondrial respiration and fatty acid metabolism in cardiac myoblasts. Promotes cholesterol efflux from macrophage cells. Detected in HDL, LDL and VLDL. Secreted by a microsomal triglyceride transfer protein (MTTP)-dependent mechanism, probably as a VLDL-associated protein that is subsequently transferred to HDL. The protein is MICOS complex subunit MIC26 (APOO) of Bos taurus (Bovine).